The primary structure comprises 371 residues: Signal peptide peptidase-like 1 (371 aa).

Topologically, residues 1 to 6 are lumenal; that stretch reads MESLWK. A helical transmembrane segment spans residues 7–27; the sequence is LSYLLEPASLALILTAVSVAY. Residues 28-57 are Cytoplasmic-facing; the sequence is ASASRALDHGREMERNLDFSEASITLDRSQ. The chain crosses the membrane as a helical span at residues 58–75; it reads ALMIPLASSCSLLLMFYL. Residues 76-80 lie on the Lumenal side of the membrane; that stretch reads FSSVS. Residues 81-103 form a helical membrane-spanning segment; that stretch reads HLVTAFTAVASAMALFFCLSPYV. Topologically, residues 104–123 are cytoplasmic; it reads NCVRSRLGVGDPFVSRCCSK. Residues 124 to 146 form a helical membrane-spanning segment; the sequence is PFTRLQGLLVAICVGTVVAWLVS. Topologically, residues 147-149 are lumenal; the sequence is GHW. Residues 150-167 traverse the membrane as a helical segment; the sequence is LLNNLLGISICIAFVSHV. Topologically, residues 168–171 are cytoplasmic; it reads RLPN. A helical transmembrane segment spans residues 172–192; the sequence is IKICALLLVCLFVYDVFWVFF. The active site involves Asp186. The Lumenal portion of the chain corresponds to 193–258; it reads SERFFGANVM…LAPGSSPGDY (66 aa). The helical transmembrane segment at 259–279 threads the bilayer; sequence MMLGLGDMAIPGMLLALVLSF. The active site involves Asp265. The Cytoplasmic segment spans residues 280-301; sequence DHRKIKDMSVSQDMPPSKQRKY. Residues 302-322 traverse the membrane as a helical segment; the sequence is VWYALTGYGVGLVTALAAGIL. The Lumenal segment spans residues 323–326; it reads SQSP. A helical membrane pass occupies residues 327-347; that stretch reads QPALLYLVPSTLGPVMYMSWL. The PAL signature appears at 328-330; that stretch reads PAL. At 348-371 the chain is on the cytoplasmic side; sequence RNELWELWEGSRPIINDKAHLLEV.

Belongs to the peptidase A22B family.

It is found in the endosome membrane. Functionally, intramembrane-cleaving aspartic protease (I-CLiP) that cleaves type II membrane signal peptides in the hydrophobic plane of the membrane. In Oryza sativa subsp. japonica (Rice), this protein is Signal peptide peptidase-like 1 (SPPL1).